The following is a 175-amino-acid chain: 2-oxo-4-hydroxy-4-carboxy-5-ureidoimidazoline decarboxylase (175 aa).

His-67 (proton donor) is an active-site residue. Substrate-binding positions include Pro-68, 84-88 (SRGEQ), and 119-123 (FVICA). Positions 173 to 175 (TKL) match the Microbody targeting signal motif.

The protein belongs to the OHCU decarboxylase family. In terms of assembly, homodimer.

The protein localises to the peroxisome. It catalyses the reaction 5-hydroxy-2-oxo-4-ureido-2,5-dihydro-1H-imidazole-5-carboxylate + H(+) = (S)-allantoin + CO2. The protein operates within purine metabolism; urate degradation; (S)-allantoin from urate: step 3/3. Functionally, catalyzes the stereoselective decarboxylation of 2-oxo-4-hydroxy-4-carboxy-5-ureidoimidazoline (OHCU) to (S)-allantoin. The protein is 2-oxo-4-hydroxy-4-carboxy-5-ureidoimidazoline decarboxylase (urad) of Amia calva (Bowfin).